The sequence spans 216 residues: Regulatory protein RecX (216 aa).

It belongs to the RecX family.

It localises to the cytoplasm. Its function is as follows. Modulates RecA activity. The chain is Regulatory protein RecX from Clostridium tetani (strain Massachusetts / E88).